A 265-amino-acid polypeptide reads, in one-letter code: Small ribosomal subunit protein uS2 (265 aa).

The segment at 226-265 (AAAPNSASVREEEFSADAADEGKGRRAPAKKGDKKADAAE) is disordered. Over residues 245–265 (DEGKGRRAPAKKGDKKADAAE) the composition is skewed to basic and acidic residues.

Belongs to the universal ribosomal protein uS2 family.

This is Small ribosomal subunit protein uS2 from Xanthomonas axonopodis pv. citri (strain 306).